Reading from the N-terminus, the 356-residue chain is Alanine racemase, catabolic (356 aa).

Lys35 functions as the Proton acceptor; specific for D-alanine in the catalytic mechanism. N6-(pyridoxal phosphate)lysine is present on Lys35. Arg130 contributes to the substrate binding site. Tyr253 serves as the catalytic Proton acceptor; specific for L-alanine. Met301 serves as a coordination point for substrate.

It belongs to the alanine racemase family. Pyridoxal 5'-phosphate is required as a cofactor.

It catalyses the reaction L-alanine = D-alanine. Its function is as follows. Isomerizes L-alanine to D-alanine which is then oxidized to pyruvate by DadA. This Klebsiella aerogenes (Enterobacter aerogenes) protein is Alanine racemase, catabolic (dadB).